Consider the following 103-residue polypeptide: NADH-quinone oxidoreductase subunit K 1 (103 aa).

A run of 3 helical transmembrane segments spans residues 6 to 26 (LGHF…GIFL), 32 to 52 (IIIL…LVAF), and 67 to 87 (LVLT…VVFF).

This sequence belongs to the complex I subunit 4L family. NDH-1 is composed of 14 different subunits. Subunits NuoA, H, J, K, L, M, N constitute the membrane sector of the complex.

Its subcellular location is the cell inner membrane. It carries out the reaction a quinone + NADH + 5 H(+)(in) = a quinol + NAD(+) + 4 H(+)(out). Functionally, NDH-1 shuttles electrons from NADH, via FMN and iron-sulfur (Fe-S) centers, to quinones in the respiratory chain. The immediate electron acceptor for the enzyme in this species is believed to be ubiquinone. Couples the redox reaction to proton translocation (for every two electrons transferred, four hydrogen ions are translocated across the cytoplasmic membrane), and thus conserves the redox energy in a proton gradient. This is NADH-quinone oxidoreductase subunit K 1 from Rhodopseudomonas palustris (strain ATCC BAA-98 / CGA009).